A 196-amino-acid polypeptide reads, in one-letter code: Pro-FMRFamide-related neuropeptide VF (196 aa).

Positions Met-1–Thr-21 are cleaved as a signal peptide. Positions Ser-22–Arg-57 are excised as a propeptide. Phe-92 carries the post-translational modification Phenylalanine amide. Propeptides lie at residues Asn-95–Glu-99 and Asn-115–Ser-121. Phe-131 is modified (phenylalanine amide). A propeptide spanning residues Thr-134–Lys-196 is cleaved from the precursor.

It belongs to the FARP (FMRFamide related peptide) family. In terms of tissue distribution, expressed in hypothalamus, where it is localized to the dorsomedial hypothalamic nucleus (DMH), paraventricular nucleus (PVN), and to neuronal projections from the PVN to the neurosecretory zone of the median eminence.

The protein resides in the secreted. May act in concert with kisspeptin, through opposing affects, to regulate the activity of gonadotropin-releasing hormone (GnRH) neurons across the seasons, leading to an annual change in fertility and the cyclical seasonal transition from non-breeding to breeding season. In terms of biological role, efficiently inhibits forskolin-induced production of cAMP. Acts as a potent negative regulator of gonadotropin synthesis and secretion. Induces secretion of prolactin. Its function is as follows. Efficiently inhibits forskolin-induced production of cAMP. Blocks morphine-induced analgesia. Functionally, shows no inhibitory activity of forskolin-induced production of cAMP. This chain is Pro-FMRFamide-related neuropeptide VF, found in Ovis aries (Sheep).